Reading from the N-terminus, the 128-residue chain is Small ribosomal subunit protein uS9 (128 aa).

The tract at residues 107–128 is disordered; sequence RAVERKKPGRPKARKRFQFSKR. Basic residues predominate over residues 113 to 128; the sequence is KPGRPKARKRFQFSKR.

This sequence belongs to the universal ribosomal protein uS9 family.

The sequence is that of Small ribosomal subunit protein uS9 from Parabacteroides distasonis (strain ATCC 8503 / DSM 20701 / CIP 104284 / JCM 5825 / NCTC 11152).